The following is a 33-amino-acid chain: MNIELIVQLGSLTLITIAGPLIVALLFLRQGNL.

Residues leucine 5–leucine 25 form a helical membrane-spanning segment.

Belongs to the Psb30/Ycf12 family. As to quaternary structure, PSII is composed of 1 copy each of membrane proteins PsbA, PsbB, PsbC, PsbD, PsbE, PsbF, PsbH, PsbI, PsbJ, PsbK, PsbL, PsbM, PsbT, PsbY, PsbZ, Psb30/Ycf12, peripheral proteins of the oxygen-evolving complex and a large number of cofactors. It forms dimeric complexes.

It is found in the plastid. It localises to the chloroplast thylakoid membrane. In terms of biological role, a core subunit of photosystem II (PSII), probably helps stabilize the reaction center. The sequence is that of Photosystem II reaction center protein Psb30 from Euglena mutabilis.